The primary structure comprises 586 residues: Glutamate--tRNA ligase (586 aa).

A disordered region spans residues 84–111; sequence LTDIESEDTTDTYDLPSLPGVSDDEPTQ. Residues 85 to 94 are compositionally biased toward acidic residues; that stretch reads TDIESEDTTD. The short motif at 119 to 129 is the 'HIGH' region element; it reads PNPNGPWHIGH.

This sequence belongs to the class-I aminoacyl-tRNA synthetase family. Glutamate--tRNA ligase type 2 subfamily.

The protein resides in the cytoplasm. The catalysed reaction is tRNA(Glu) + L-glutamate + ATP = L-glutamyl-tRNA(Glu) + AMP + diphosphate. In terms of biological role, catalyzes the attachment of glutamate to tRNA(Glu) in a two-step reaction: glutamate is first activated by ATP to form Glu-AMP and then transferred to the acceptor end of tRNA(Glu). This is Glutamate--tRNA ligase from Haloquadratum walsbyi (strain DSM 16790 / HBSQ001).